Consider the following 27-residue polypeptide: Secretin (27 aa).

At Leu27 the chain carries Leucine amide.

Belongs to the glucagon family.

The protein resides in the secreted. Functionally, hormone involved in different processes, such as regulation of the pH of the duodenal content, food intake and water homeostasis. Exerts its biological effects by binding to secretin receptor (SCTR), a G-protein coupled receptor expressed in the basolateral domain of several cells. Acts as a key gastrointestinal hormone by regulating the pH of the duodenal content. Secreted by S cells of the duodenum in the crypts of Lieberkuehn and regulates the pH of the duodenum by (1) inhibiting the secretion of gastric acid from the parietal cells of the stomach and (2) stimulating the production of bicarbonate (NaHCO(3)) from the ductal cells of the pancreas. Production of bicarbonate is essential to neutralize the pH and ensure no damage is done to the small intestine by the gastric acid. In addition to regulating the pH of the duodenal content, plays a central role in diet induced thermogenesis: acts as a non-sympathetic brown fat (BAT) activator mediating prandial thermogenesis, which consequentially induces satiation. Mechanistically, secretin released by the gut after a meal binds to secretin receptor (SCTR) in brown adipocytes, activating brown fat thermogenesis by stimulating lipolysis, which is sensed in the brain and promotes satiation. Also able to stimulate lipolysis in white adipocytes. Also plays an important role in cellular osmoregulation: released into the systemic circulation in response to hyperosmolality and acts at different levels in the hypothalamus, pituitary and kidney to regulate water homeostasis. Also plays a role in the central nervous system, possibly by acting as a neuropeptide hormone: required for hippocampal synaptic function and neural progenitor cells maintenance. This is Secretin from Oryctolagus cuniculus (Rabbit).